The following is a 312-amino-acid chain: Mevalonate kinase (312 aa).

Residue 104-114 (PISCGLGSSAS) coordinates ATP. The Proton acceptor role is filled by D155.

Belongs to the GHMP kinase family. Mevalonate kinase subfamily. As to quaternary structure, homodimer. Requires Mg(2+) as cofactor.

The protein localises to the cytoplasm. The enzyme catalyses (R)-mevalonate + ATP = (R)-5-phosphomevalonate + ADP + H(+). Its pathway is isoprenoid biosynthesis; isopentenyl diphosphate biosynthesis via mevalonate pathway; isopentenyl diphosphate from (R)-mevalonate: step 1/3. Farnesyl- and geranyl-pyrophosphates are competitive inhibitors. Slightly inhibited by high concentration of ATP. Functionally, catalyzes the phosphorylation of (R)-mevalonate (MVA) to (R)-mevalonate 5-phosphate (MVAP). Functions in the mevalonate (MVA) pathway leading to isopentenyl diphosphate (IPP), a key precursor for the biosynthesis of isoprenoid compounds such as archaeal membrane lipids. The protein is Mevalonate kinase of Methanocaldococcus jannaschii (strain ATCC 43067 / DSM 2661 / JAL-1 / JCM 10045 / NBRC 100440) (Methanococcus jannaschii).